The chain runs to 298 residues: Glycine--tRNA ligase alpha subunit (298 aa).

It belongs to the class-II aminoacyl-tRNA synthetase family. In terms of assembly, tetramer of two alpha and two beta subunits.

It localises to the cytoplasm. It catalyses the reaction tRNA(Gly) + glycine + ATP = glycyl-tRNA(Gly) + AMP + diphosphate. This is Glycine--tRNA ligase alpha subunit from Gloeothece citriformis (strain PCC 7424) (Cyanothece sp. (strain PCC 7424)).